Reading from the N-terminus, the 356-residue chain is 3-isopropylmalate dehydrogenase (356 aa).

Residues Arg-95, Arg-105, Arg-133, and Asp-223 each contribute to the substrate site. Residues Asp-223, Asp-247, and Asp-251 each contribute to the Mg(2+) site. 281–293 (GSAPDIAGQNKAN) is an NAD(+) binding site.

Belongs to the isocitrate and isopropylmalate dehydrogenases family. LeuB type 1 subfamily. Homodimer. The cofactor is Mg(2+). Mn(2+) is required as a cofactor.

Its subcellular location is the cytoplasm. The catalysed reaction is (2R,3S)-3-isopropylmalate + NAD(+) = 4-methyl-2-oxopentanoate + CO2 + NADH. The protein operates within amino-acid biosynthesis; L-leucine biosynthesis; L-leucine from 3-methyl-2-oxobutanoate: step 3/4. Functionally, catalyzes the oxidation of 3-carboxy-2-hydroxy-4-methylpentanoate (3-isopropylmalate) to 3-carboxy-4-methyl-2-oxopentanoate. The product decarboxylates to 4-methyl-2 oxopentanoate. The protein is 3-isopropylmalate dehydrogenase of Neisseria meningitidis serogroup B (strain ATCC BAA-335 / MC58).